Here is a 199-residue protein sequence, read N- to C-terminus: Prolactin-1 (199 aa).

3 disulfides stabilise this stretch: C4–C11, C58–C174, and C191–C199. N60 carries N-linked (GlcNAc...) asparagine glycosylation.

Belongs to the somatotropin/prolactin family. Post-translationally, glycosylated.

The protein localises to the secreted. In Crocodylus novaeguineae (Crocodile), this protein is Prolactin-1.